The following is a 998-amino-acid chain: Bifunctional glutamine synthetase adenylyltransferase/adenylyl-removing enzyme (998 aa).

The adenylyl removase stretch occupies residues 1-487; it reads MVVTKPATQR…LHAKLFYQPL (487 aa). Positions 492–998 are adenylyl transferase; sequence GPAGLEIRHG…KAVVCKVFGS (507 aa).

The protein belongs to the GlnE family. Mg(2+) is required as a cofactor.

It catalyses the reaction [glutamine synthetase]-O(4)-(5'-adenylyl)-L-tyrosine + phosphate = [glutamine synthetase]-L-tyrosine + ADP. The enzyme catalyses [glutamine synthetase]-L-tyrosine + ATP = [glutamine synthetase]-O(4)-(5'-adenylyl)-L-tyrosine + diphosphate. Involved in the regulation of glutamine synthetase GlnA, a key enzyme in the process to assimilate ammonia. When cellular nitrogen levels are high, the C-terminal adenylyl transferase (AT) inactivates GlnA by covalent transfer of an adenylyl group from ATP to specific tyrosine residue of GlnA, thus reducing its activity. Conversely, when nitrogen levels are low, the N-terminal adenylyl removase (AR) activates GlnA by removing the adenylyl group by phosphorolysis, increasing its activity. The regulatory region of GlnE binds the signal transduction protein PII (GlnB) which indicates the nitrogen status of the cell. This chain is Bifunctional glutamine synthetase adenylyltransferase/adenylyl-removing enzyme, found in Mycolicibacterium paratuberculosis (strain ATCC BAA-968 / K-10) (Mycobacterium paratuberculosis).